We begin with the raw amino-acid sequence, 419 residues long: Serine hydroxymethyltransferase (419 aa).

Residues leucine 121 and 125-127 contribute to the (6S)-5,6,7,8-tetrahydrofolate site; that span reads GHL. Lysine 229 bears the N6-(pyridoxal phosphate)lysine mark. A (6S)-5,6,7,8-tetrahydrofolate-binding site is contributed by 354 to 356; it reads SPF.

This sequence belongs to the SHMT family. In terms of assembly, homodimer. Requires pyridoxal 5'-phosphate as cofactor.

Its subcellular location is the cytoplasm. It catalyses the reaction (6R)-5,10-methylene-5,6,7,8-tetrahydrofolate + glycine + H2O = (6S)-5,6,7,8-tetrahydrofolate + L-serine. Its pathway is one-carbon metabolism; tetrahydrofolate interconversion. It participates in amino-acid biosynthesis; glycine biosynthesis; glycine from L-serine: step 1/1. Its function is as follows. Catalyzes the reversible interconversion of serine and glycine with tetrahydrofolate (THF) serving as the one-carbon carrier. This reaction serves as the major source of one-carbon groups required for the biosynthesis of purines, thymidylate, methionine, and other important biomolecules. Also exhibits THF-independent aldolase activity toward beta-hydroxyamino acids, producing glycine and aldehydes, via a retro-aldol mechanism. The protein is Serine hydroxymethyltransferase of Coxiella burnetii (strain RSA 331 / Henzerling II).